Consider the following 978-residue polypeptide: Macrophage colony-stimulating factor 1 receptor (978 aa).

A signal peptide spans 1–19 (MELGPPLVLLLATVWHGQG). Topologically, residues 20 to 515 (APVIEPSGPE…QLPDESLFTP (496 aa)) are extracellular. Ig-like C2-type domains lie at 24-104 (EPSG…VKDP), 107-197 (SWNL…KVNR), 204-298 (QIKL…VVES), 299-397 (AYLN…LTLR), and 398-503 (YPPE…SLGQ). 3 cysteine pairs are disulfide-bonded: Cys42–Cys84, Cys127–Cys177, and Cys224–Cys278. Residues Asn45 and Asn73 are each glycosylated (N-linked (GlcNAc...) asparagine). Residues Asn302, Asn335, Asn389, Asn410, Asn449, Asn478, and Asn491 are each glycosylated (N-linked (GlcNAc...) asparagine). Cys417 and Cys483 are oxidised to a cystine. Residues 516-536 (VVVACMSVMSLLVLLLLLLLY) traverse the membrane as a helical segment. The Cytoplasmic portion of the chain corresponds to 537–978 (KYKQKPKYQV…LQPNNYQFAC (442 aa)). Residues 540-572 (QKPKYQVRWKIIERYEGNSYTFIDPTQLPYNEK) are regulatory juxtamembrane domain. A phosphotyrosine; by autocatalysis mark is found at Tyr544 and Tyr559. A Protein kinase domain is found at 580–914 (LQFGKTLGAG…CFLLQEQARL (335 aa)). Residues 586 to 594 (LGAGAFGKV) and Lys614 contribute to the ATP site. Residues Tyr697 and Tyr706 each carry the phosphotyrosine; by autocatalysis modification. The residue at position 711 (Ser711) is a Phosphoserine. Tyr721 is modified (phosphotyrosine; by autocatalysis). The active-site Proton acceptor is the Asp776. An activation loop region spans residues 794–816 (DFGLARDIMNDSNYVVKGNARLP). Phosphotyrosine; by autocatalysis occurs at positions 807 and 921. A disordered region spans residues 921–957 (YANLPSSGGSSGSDSGGGSSGGSSSEPEEESSSEHLA). Gly residues predominate over residues 929–941 (GSSGSDSGGGSSG). Tyr974 is modified (phosphotyrosine; by autocatalysis).

Belongs to the protein kinase superfamily. Tyr protein kinase family. CSF-1/PDGF receptor subfamily. Monomer. Homodimer. Interacts with CSF1 and IL34. Interaction with dimeric CSF1 or IL34 leads to receptor homodimerization. Interacts with INPPL1/SHIP2 and THOC5. Interacts (tyrosine phosphorylated) with PLCG2 (via SH2 domain). Interacts (tyrosine phosphorylated) with PIK3R1 (via SH2 domain). Interacts (tyrosine phosphorylated) with FYN, YES1 and SRC (via SH2 domain). Interacts (tyrosine phosphorylated) with CBL, GRB2 and SLA2. In terms of processing, autophosphorylated in response to CSF1 or IL34 binding. Phosphorylation at Tyr-559 is important for normal down-regulation of signaling by ubiquitination, internalization and degradation. Phosphorylation at Tyr-559 and Tyr-807 is important for interaction with SRC family members, including FYN, YES1 and SRC, and for subsequent activation of these protein kinases. Phosphorylation at Tyr-697 and Tyr-921 is important for interaction with GRB2. Phosphorylation at Tyr-721 is important for interaction with PIK3R1. Phosphorylation at Tyr-721 and Tyr-807 is important for interaction with PLCG2. Phosphorylation at Tyr-974 is important for interaction with CBL. Dephosphorylation by PTPN2 negatively regulates downstream signaling and macrophage differentiation. Post-translationally, ubiquitinated. Becomes rapidly polyubiquitinated after autophosphorylation, leading to its degradation.

The protein resides in the cell membrane. It carries out the reaction L-tyrosyl-[protein] + ATP = O-phospho-L-tyrosyl-[protein] + ADP + H(+). Present in an inactive conformation in the absence of bound ligand. CSF1 or IL34 binding leads to dimerization and activation by autophosphorylation on tyrosine residues. Functionally, tyrosine-protein kinase that acts as a cell-surface receptor for CSF1 and IL34 and plays an essential role in the regulation of survival, proliferation and differentiation of hematopoietic precursor cells, especially mononuclear phagocytes, such as macrophages and monocytes. Promotes the release of pro-inflammatory chemokines in response to IL34 and CSF1, and thereby plays an important role in innate immunity and in inflammatory processes. Plays an important role in the regulation of osteoclast proliferation and differentiation, the regulation of bone resorption, and is required for normal bone and tooth development. Required for normal male and female fertility, and for normal development of milk ducts and acinar structures in the mammary gland during pregnancy. Promotes reorganization of the actin cytoskeleton, regulates formation of membrane ruffles, cell adhesion and cell migration, and promotes cancer cell invasion. Activates several signaling pathways in response to ligand binding, including the ERK1/2 and the JNK pathway. Phosphorylates PIK3R1, PLCG2, GRB2, SLA2 and CBL. Activation of PLCG2 leads to the production of the cellular signaling molecules diacylglycerol and inositol 1,4,5-trisphosphate, that then lead to the activation of protein kinase C family members, especially PRKCD. Phosphorylation of PIK3R1, the regulatory subunit of phosphatidylinositol 3-kinase, leads to activation of the AKT1 signaling pathway. Activated CSF1R also mediates activation of the MAP kinases MAPK1/ERK2 and/or MAPK3/ERK1, and of the SRC family kinases SRC, FYN and YES1. Activated CSF1R transmits signals both via proteins that directly interact with phosphorylated tyrosine residues in its intracellular domain, or via adapter proteins, such as GRB2. Promotes activation of STAT family members STAT3, STAT5A and/or STAT5B. Promotes tyrosine phosphorylation of SHC1 and INPP5D/SHIP-1. Receptor signaling is down-regulated by protein phosphatases, such as INPP5D/SHIP-1, that dephosphorylate the receptor and its downstream effectors, and by rapid internalization of the activated receptor. In the central nervous system, may play a role in the development of microglia macrophages. This Rattus norvegicus (Rat) protein is Macrophage colony-stimulating factor 1 receptor (Csf1r).